The chain runs to 429 residues: GTPase Obg (429 aa).

In terms of domain architecture, Obg spans 1 to 158 (MFVDHVKIYV…LNVILELKVL (158 aa)). Residues 119–143 (AGRGGRGNSRFATPANPAPELSEKG) are disordered. Positions 159–329 (ADVGLVGFPS…LLFAIADLLE (171 aa)) constitute an OBG-type G domain. Residues 165–172 (GFPSVGKS), 190–194 (FTTIV), 212–215 (DLPG), 282–285 (NKMD), and 310–312 (SAV) contribute to the GTP site. Positions 172 and 192 each coordinate Mg(2+). The OCT domain maps to 351 to 429 (KHEAKGEDFE…LQEFEFEFVD (79 aa)).

This sequence belongs to the TRAFAC class OBG-HflX-like GTPase superfamily. OBG GTPase family. Monomer. Mg(2+) is required as a cofactor.

Its subcellular location is the cytoplasm. Functionally, an essential GTPase which binds GTP, GDP and possibly (p)ppGpp with moderate affinity, with high nucleotide exchange rates and a fairly low GTP hydrolysis rate. Plays a role in control of the cell cycle, stress response, ribosome biogenesis and in those bacteria that undergo differentiation, in morphogenesis control. The chain is GTPase Obg from Lysinibacillus sphaericus (strain C3-41).